The sequence spans 132 residues: Succinate dehydrogenase cytochrome b560 subunit (132 aa).

The next 2 membrane-spanning stretches (helical) occupy residues 32–49 (LYLVFFLFVLFCSIKFLF) and 59–81 (KFVKTCFFFILSFFIVFIVFSMY). Histidine 86 lines the heme pocket. A helical membrane pass occupies residues 107 to 127 (VTMSTKLSLSLSLVLVLINCL).

Belongs to the cytochrome b560 family. In terms of assembly, forms part of complex II containing four subunits: a 70 kDa flavoprotein (FP), a 27 kDa iron-sulfur protein (IP), a cytochrome B and a membrane-anchoring protein. Requires heme as cofactor.

Its subcellular location is the mitochondrion inner membrane. Its pathway is carbohydrate metabolism; tricarboxylic acid cycle. In terms of biological role, membrane-anchoring subunit of succinate dehydrogenase (SDH) that is involved in complex II of the mitochondrial electron transport chain and is responsible for transferring electrons from succinate to ubiquinone (coenzyme Q). This Cyanidium caldarium (Red alga) protein is Succinate dehydrogenase cytochrome b560 subunit (SDH3).